We begin with the raw amino-acid sequence, 245 residues long: Protein-glutamine gamma-glutamyltransferase (245 aa).

It belongs to the bacillus TGase family.

It catalyses the reaction L-glutaminyl-[protein] + L-lysyl-[protein] = [protein]-L-lysyl-N(6)-5-L-glutamyl-[protein] + NH4(+). Functionally, probably plays a role in the assembly of the spore coat proteins by catalyzing epsilon-(gamma-glutamyl)lysine cross-links. In wild-type spores at 37 degrees Celsius, tgl mediates the cross-linking of GerQ in higher molecular mass forms, probably in cooperation with YabG. This chain is Protein-glutamine gamma-glutamyltransferase (tgl), found in Bacillus subtilis (strain 168).